The following is a 685-amino-acid chain: Sodium/glucose cotransporter 4 (685 aa).

The tract at residues 1 to 20 is disordered; the sequence is MNTELVAMEPGVSRNGVRTE. Over 1–32 the chain is Extracellular; the sequence is MNTELVAMEPGVSRNGVRTETTTNPSLGLHTY. The helical transmembrane segment at 33-53 threads the bilayer; the sequence is DIVVVVIYFVFVLAVGIWSSI. The Cytoplasmic portion of the chain corresponds to 54–71; that stretch reads RASRGTVGGYFLAGRSMT. Residues 72–94 traverse the membrane as a helical segment; sequence WWPIGASLMSSNVGSGLFIGLAG. Residues 95-110 are Extracellular-facing; it reads TGAAGGLAVGGFEWNA. The chain crosses the membrane as a helical span at residues 111-131; it reads TFLLLALGWIFVPVYIAAGVV. Topologically, residues 132–153 are cytoplasmic; sequence TMPQYLKKRFGGQRIQVYMSVL. The chain crosses the membrane as a helical span at residues 154-174; that stretch reads SLILYIFTKISTDIFSGALFI. At 175–186 the chain is on the extracellular side; the sequence is QMALGWNLYLST. The chain crosses the membrane as a helical span at residues 187-207; it reads VILLVVTAVYTIAGGLTAVIY. Topologically, residues 208 to 213 are cytoplasmic; sequence TDALQT. A helical membrane pass occupies residues 214 to 234; that stretch reads VIMVGGALVLMFLGFQEVGWY. Residues 235–271 are Extracellular-facing; sequence PGLQQLYRQAIPNTTVPNTTCHLPRPDAFHMLRDPVN. Residue asparagine 247 is glycosylated (N-linked (GlcNAc...) asparagine). A helical membrane pass occupies residues 272–292; the sequence is GDIPWPGLIFGLTVLATWCWC. At 293-313 the chain is on the cytoplasmic side; the sequence is TDQVIVQRSLAAKNLSHAKGG. The chain crosses the membrane as a helical span at residues 314-334; the sequence is SVLGGYLKILPMFFIVMPGMI. Residues 335-379 are Extracellular-facing; it reads SRALYPDEVACVDPDICQRVCGARVGCSNIAYPKLVMALMPVGLR. The chain crosses the membrane as a helical span at residues 380 to 402; sequence GLMIAVIMAALMSSLTSIFNSSS. The Cytoplasmic segment spans residues 403-423; it reads TLFAIDVWQRFRRQASEQELM. The chain crosses the membrane as a helical span at residues 424-444; the sequence is VVGRLFVVFLVVISILWIPII. Residues 445–455 are Extracellular-facing; sequence QSSNSGQLFDY. The helical transmembrane segment at 456 to 476 threads the bilayer; the sequence is IQSITSYLAPPITALFLLAIF. Residues 477–483 are Cytoplasmic-facing; that stretch reads CKRVNEP. The chain crosses the membrane as a helical span at residues 484 to 504; sequence GAFWGLMFGLVVGILRMILEF. At 505 to 526 the chain is on the extracellular side; the sequence is SYSAPACGEMDRRPAVLKDFHY. Residues 527 to 547 form a helical membrane-spanning segment; sequence LYFALLLCGLTAIIIVVISFF. Residues 548-664 are Cytoplasmic-facing; sequence TEPIPDDKLA…SIEEEPLWRR (117 aa). The disordered stretch occupies residues 577–616; that stretch reads VSVNNTEDDNSPGLAGRPVVEGPAGDEEEANTTQGPEQPG. A helical transmembrane segment spans residues 665-685; it reads VCNINAIILLAINIFLWGYFA.

Belongs to the sodium:solute symporter (SSF) (TC 2.A.21) family.

It is found in the cell membrane. The enzyme catalyses D-mannose(out) + n Na(+)(out) = D-mannose(in) + n Na(+)(in). Functionally, electrogenic Na(+)-coupled sugar symporter that may play a primary role in D-mannose and possibly D-fructose and D-glucose transport at the plasma membrane. Transporter activity is driven by a transmembrane Na(+) electrochemical gradient set by the Na(+)/K(+) pump. Exclusively recognizes sugar substrates having a pyranose ring with an axial hydroxyl group on carbon 2. This is Sodium/glucose cotransporter 4 (Slc5a9) from Mus musculus (Mouse).